The following is a 274-amino-acid chain: NADPH-dependent 7-cyano-7-deazaguanine reductase (274 aa).

80–82 (VES) contacts substrate. 82–83 (SK) serves as a coordination point for NADPH. Cys181 functions as the Thioimide intermediate in the catalytic mechanism. Asp188 (proton donor) is an active-site residue. Residue 220–221 (HE) coordinates substrate. 249–250 (RG) lines the NADPH pocket.

Belongs to the GTP cyclohydrolase I family. QueF type 2 subfamily. Homodimer.

It localises to the cytoplasm. The catalysed reaction is 7-aminomethyl-7-carbaguanine + 2 NADP(+) = 7-cyano-7-deazaguanine + 2 NADPH + 3 H(+). The protein operates within tRNA modification; tRNA-queuosine biosynthesis. Functionally, catalyzes the NADPH-dependent reduction of 7-cyano-7-deazaguanine (preQ0) to 7-aminomethyl-7-deazaguanine (preQ1). This Burkholderia mallei (strain NCTC 10247) protein is NADPH-dependent 7-cyano-7-deazaguanine reductase.